Consider the following 398-residue polypeptide: Steroid C26-monooxygenase (398 aa).

C340 is a binding site for heme.

This sequence belongs to the cytochrome P450 family. The cofactor is heme.

It catalyses the reaction cholest-4-en-3-one + 6 reduced [2Fe-2S]-[ferredoxin] + 3 O2 + 5 H(+) = (25R)-3-oxocholest-4-en-26-oate + 6 oxidized [2Fe-2S]-[ferredoxin] + 4 H2O. The catalysed reaction is cholest-4-en-3-one + 2 reduced [2Fe-2S]-[ferredoxin] + O2 + 2 H(+) = (25R)-3-oxocholest-4-en-26-ol + 2 oxidized [2Fe-2S]-[ferredoxin] + H2O. The enzyme catalyses (25R)-3-oxocholest-4-en-26-ol + 2 reduced [2Fe-2S]-[ferredoxin] + O2 + 2 H(+) = (25R)-3-oxocholest-4-en-26-al + 2 oxidized [2Fe-2S]-[ferredoxin] + 2 H2O. It carries out the reaction (25R)-3-oxocholest-4-en-26-al + 2 reduced [2Fe-2S]-[ferredoxin] + O2 + H(+) = (25R)-3-oxocholest-4-en-26-oate + 2 oxidized [2Fe-2S]-[ferredoxin] + H2O. It catalyses the reaction cholesterol + NADPH + O2 + H(+) = 26-hydroxycholesterol + NADP(+) + H2O. The catalysed reaction is 26-hydroxycholesterol + 2 reduced [2Fe-2S]-[ferredoxin] + O2 + 2 H(+) = (3beta)-hydroxy-cholest-5-en-26-al + 2 oxidized [2Fe-2S]-[ferredoxin] + 2 H2O. The enzyme catalyses (3beta)-hydroxy-cholest-5-en-26-al + NADPH + O2 = (3beta)-hydroxy-cholest-5-en-26-oate + NADP(+) + H2O. It carries out the reaction (25S)-3-oxocholest-4-en-26-ol + 2 reduced [2Fe-2S]-[ferredoxin] + O2 + 2 H(+) = (25S)-3-oxocholest-4-en-26-al + 2 oxidized [2Fe-2S]-[ferredoxin] + 2 H2O. It catalyses the reaction (25S)-3-oxocholest-4-en-26-al + 2 reduced [2Fe-2S]-[ferredoxin] + O2 + H(+) = (25S)-3-oxocholest-4-en-26-oate + 2 oxidized [2Fe-2S]-[ferredoxin] + H2O. It participates in steroid metabolism; cholesterol degradation. Its activity is regulated as follows. Inhibited by econazole, clotrimazole and miconazole. Involved in the utilization of cholesterol as the sole carbon and energy source by degrading the side chain during infection. Primarily catalyzes the sequential oxidation of the terminal methyl of cholest-4-en-3-one into (25R)-26-hydroxycholest-4-en-3-one (alcohol), (25R)-26-oxocholest-4-en-3-one (aldehyde), to finally yield the carboxylic acid (25R)-3-oxocholest-4-en-26-oate. In vitro, Cyp142 catalyzes with equal preference the oxidation of both (25R)- and (25S)-26-hydroxycholest-4-en-3-one diastereomers to the corresponding carboxylic acid which is a prerequisite for entry into the beta-oxidation pathway. Also able to sequentially oxidize cholesterol itself, not only cholest-4-en-3-one. The protein is Steroid C26-monooxygenase (cyp142) of Mycobacterium tuberculosis (strain ATCC 25618 / H37Rv).